The following is a 386-amino-acid chain: Cytochrome b (386 aa).

The next 4 helical transmembrane spans lie at 32–52, 76–98, 113–133, and 179–199; these read LGSL…FLAM, YLIR…AHIG, VWVI…LGYC, and FFAL…MHLM. Residues histidine 82 and histidine 96 each contribute to the heme b site. 2 residues coordinate heme b: histidine 183 and histidine 197. Histidine 202 serves as a coordination point for a ubiquinone. 4 helical membrane passes run 225 to 245, 289 to 309, 321 to 341, and 348 to 368; these read FVFK…LFVF, LGGV…PVTD, ISKT…QLGQ, and FIQL…FIVP.

It belongs to the cytochrome b family. As to quaternary structure, fungal cytochrome b-c1 complex contains 10 subunits; 3 respiratory subunits, 2 core proteins and 5 low-molecular weight proteins. Cytochrome b-c1 complex is a homodimer. Heme b is required as a cofactor.

Its subcellular location is the mitochondrion inner membrane. In terms of biological role, component of the ubiquinol-cytochrome c reductase complex (complex III or cytochrome b-c1 complex) that is part of the mitochondrial respiratory chain. The b-c1 complex mediates electron transfer from ubiquinol to cytochrome c. Contributes to the generation of a proton gradient across the mitochondrial membrane that is then used for ATP synthesis. This Wickerhamomyces canadensis (Yeast) protein is Cytochrome b (COB).